The sequence spans 580 residues: Rap guanine nucleotide exchange factor 5 (580 aa).

The 134-residue stretch at 67-200 folds into the N-terminal Ras-GEF domain; sequence DRYVVVSGTP…ELKEFQKILG (134 aa). The 236-residue stretch at 344 to 579 folds into the Ras-GEF domain; the sequence is NTWDLALELM…FELSHRLEPR (236 aa).

In terms of tissue distribution, in the embryo, expressed in young neurons of the developing telencephalon, diencephalon and hindbrain. Not expressed in progenitor cells in the ventricular zone.

It is found in the nucleus. Its function is as follows. Guanine nucleotide exchange factor (GEF) for RAP1A, RAP2A and MRAS/M-Ras-GTP. Its association with MRAS inhibits Rap1 activation. This Rattus norvegicus (Rat) protein is Rap guanine nucleotide exchange factor 5 (Rapgef5).